Consider the following 415-residue polypeptide: Citrate (Re)-synthase (415 aa).

Residues 4–275 (IFIIDVTNRD…GHEVDLSKAW (272 aa)) form the Pyruvate carboxyltransferase domain.

It belongs to the alpha-IPM synthase/homocitrate synthase family. Mn(2+) serves as cofactor.

The catalysed reaction is oxaloacetate + acetyl-CoA + H2O = citrate + CoA + H(+). Inhibited by citrate and under aerobic conditions. Catalyzes the condensation of the acetyl group of acetyl coenzyme A (acetyl-CoA) with oxaloacetate to form citrate. This enzyme is highly Re-face stereospecific with respect to the C-2 of oxaloacetate. The polypeptide is Citrate (Re)-synthase (Dehalococcoides mccartyi (strain CBDB1)).